A 341-amino-acid polypeptide reads, in one-letter code: Cyclin-Y (341 aa).

The N-myristoyl glycine moiety is linked to residue glycine 2. Phosphoserine occurs at positions 21 and 25. Phosphothreonine is present on threonine 30. Serine 33 bears the Phosphoserine mark. Threonine 37 is subject to Phosphothreonine. Phosphothreonine; by CDK14 is present on threonine 67. Phosphoserine; by CDK14 is present on residues serine 71 and serine 73. Threonine 75 is subject to Phosphothreonine. Phosphoserine; by CDK14 is present on serine 83. Phosphoserine is present on residues serine 99, serine 100, and serine 102. One can recognise a Cyclin N-terminal domain in the interval 143–265 (DIFDENLHPL…FLELLQFNIN (123 aa)). Serine 280 is modified (phosphoserine). Serine 288 and serine 295 each carry phosphoserine; by CDK14. 2 positions are modified to phosphoserine: serine 324 and serine 326. A Phosphothreonine modification is found at threonine 331.

It belongs to the cyclin family. Cyclin Y subfamily. In terms of assembly, found in a complex with CAPRIN2, LRP6 and CDK14 during G2/M stage; CAPRIN2 functions as a scaffold for the complex by binding to CCNY via its N terminus and to CDK14 via its C terminus. Interacts with CDK14. Interacts with CDK16. Interacts with LRP6. Ubiquitinated; leading to its degradation. In terms of processing, heavily phosphorylated. Phosphorylation at Ser-71 and Ser-73 by CDK14 is enhanced during the G2 and M cell cycle phases, and creates a phosphodegron triggering SCF-dependent ubiquitination. Widely expressed.

Its subcellular location is the cell membrane. The protein localises to the nucleus. Positive regulatory subunit of the cyclin-dependent kinases CDK14/PFTK1 and CDK16. Acts as a cell-cycle regulator of Wnt signaling pathway during G2/M phase by recruiting CDK14/PFTK1 to the plasma membrane and promoting phosphorylation of LRP6, leading to the activation of the Wnt signaling pathway. Recruits CDK16 to the plasma membrane. Isoform 3 might play a role in the activation of MYC-mediated transcription. This Homo sapiens (Human) protein is Cyclin-Y (CCNY).